The following is a 128-amino-acid chain: Large ribosomal subunit protein bL12 (128 aa).

Belongs to the bacterial ribosomal protein bL12 family. Homodimer. Part of the ribosomal stalk of the 50S ribosomal subunit. Forms a multimeric L10(L12)X complex, where L10 forms an elongated spine to which 2 to 4 L12 dimers bind in a sequential fashion. Binds GTP-bound translation factors.

Functionally, forms part of the ribosomal stalk which helps the ribosome interact with GTP-bound translation factors. Is thus essential for accurate translation. The protein is Large ribosomal subunit protein bL12 of Desulfosudis oleivorans (strain DSM 6200 / JCM 39069 / Hxd3) (Desulfococcus oleovorans).